Here is a 351-residue protein sequence, read N- to C-terminus: UDP-3-O-acylglucosamine N-acyltransferase (351 aa).

The Proton acceptor role is filled by His240.

This sequence belongs to the transferase hexapeptide repeat family. LpxD subfamily. Homotrimer.

It carries out the reaction a UDP-3-O-[(3R)-3-hydroxyacyl]-alpha-D-glucosamine + a (3R)-hydroxyacyl-[ACP] = a UDP-2-N,3-O-bis[(3R)-3-hydroxyacyl]-alpha-D-glucosamine + holo-[ACP] + H(+). It functions in the pathway bacterial outer membrane biogenesis; LPS lipid A biosynthesis. In terms of biological role, catalyzes the N-acylation of UDP-3-O-acylglucosamine using 3-hydroxyacyl-ACP as the acyl donor. Is involved in the biosynthesis of lipid A, a phosphorylated glycolipid that anchors the lipopolysaccharide to the outer membrane of the cell. This chain is UDP-3-O-acylglucosamine N-acyltransferase, found in Pseudomonas fluorescens (strain Pf0-1).